Here is a 419-residue protein sequence, read N- to C-terminus: Appendage-associated protein (419 aa).

Positions 1–39 (MIVTYGTVGCPVSRGGSPGCGRRIAEELRLAEDARLRLA) are cleaved as a signal peptide. Residues 232–262 (ERQKAQRRREERAAKAREELRKELNDIDAKW) are a coiled coil.

The protein resides in the secreted. Its function is as follows. Associates with actin filament appendages that are formed in the inclusion appendages of the parasitophorous vacuole during infection of the host erythrocyte. The protein is Appendage-associated protein of Anaplasma marginale (strain St. Maries).